Here is a 408-residue protein sequence, read N- to C-terminus: Bone morphogenetic protein 4 (408 aa).

A signal peptide spans 1–19; sequence MIPGNRMLMVVLLCQVLLG. Positions 20–292 are excised as a propeptide; that stretch reads GATDASLIPE…HTLTRRRAKR (273 aa). Phosphoserine is present on S91. The interval 91–113 is disordered; that stretch reads SGEEEEEEQSQGTGLEYPERPAS. 2 N-linked (GlcNAc...) asparagine glycosylation sites follow: N144 and N209. The segment at 281 to 307 is disordered; sequence RGHTLTRRRAKRSPKHHPQRSRKKNKN. Positions 284 to 307 are enriched in basic residues; that stretch reads TLTRRRAKRSPKHHPQRSRKKNKN. Disulfide bonds link C308–C373, C337–C405, and C341–C407. Residues N350 and N365 are each glycosylated (N-linked (GlcNAc...) asparagine).

This sequence belongs to the TGF-beta family. In terms of assembly, homodimer; disulfide-linked. Interacts with GREM2. Part of a complex consisting of TWSG1 and CHRD. Interacts with the serine proteases, HTRA1 and HTRA3; the interaction with either inhibits BMP4-mediated signaling. The HTRA protease activity is required for this inhibition. Interacts with SOSTDC1. Interacts with FBN1 (via N-terminal domain) and FBN2. Interacts with type I receptor BMPR1A. Interacts with type II receptor BMPR2. Interacts with FSTL1; this interaction inhibits the activation of the BMP4/Smad1/5/8 signaling pathway. Interacts with SCUBE3. Interacts with TGFBR3.

It localises to the secreted. It is found in the extracellular space. Its subcellular location is the extracellular matrix. In terms of biological role, growth factor of the TGF-beta superfamily that plays essential roles in many developmental processes, including neurogenesis, vascular development, angiogenesis and osteogenesis. Acts in concert with PTHLH/PTHRP to stimulate ductal outgrowth during embryonic mammary development and to inhibit hair follicle induction. Initiates the canonical BMP signaling cascade by associating with type I receptor BMPR1A and type II receptor BMPR2. Once all three components are bound together in a complex at the cell surface, BMPR2 phosphorylates and activates BMPR1A. In turn, BMPR1A propagates signal by phosphorylating SMAD1/5/8 that travel to the nucleus and act as activators and repressors of transcription of target genes. Positively regulates the expression of odontogenic development regulator MSX1 via inducing the IPO7-mediated import of SMAD1 to the nucleus. Required for MSX1-mediated mesenchymal molar tooth bud development beyond the bud stage, via promoting Wnt signaling. Acts as a positive regulator of odontoblast differentiation during mesenchymal tooth germ formation, expression is repressed during the bell stage by MSX1-mediated inhibition of CTNNB1 signaling. Able to induce its own expression in dental mesenchymal cells and also in the neighboring dental epithelial cells via an MSX1-mediated pathway. Can also signal through non-canonical BMP pathways such as ERK/MAP kinase, PI3K/Akt, or SRC cascades. For example, induces SRC phosphorylation which, in turn, activates VEGFR2, leading to an angiogenic response. The protein is Bone morphogenetic protein 4 of Rattus norvegicus (Rat).